Reading from the N-terminus, the 54-residue chain is uncharacterized protein (54 aa).

A disordered region spans residues 1–54 (MWTLKARKEHTGISGKPTARTDRHGSTRSGDSELQASARRFSRLPDRCGAQGVT).

This is an uncharacterized protein from Mycobacterium tuberculosis (strain ATCC 25618 / H37Rv).